Here is a 71-residue protein sequence, read N- to C-terminus: Calcium dodecin (71 aa).

Position 18 (Glu18) interacts with Ca(2+).

The protein belongs to the dodecin family. In terms of assembly, homododecamer; 12 subunits assemble to form a hollow sphere with a diameter of about 75 Angstroms. Calcium ions are bound at the interface between three subunits.

Functionally, binds calcium ions. May play a role in sequestering additional small ligands. This chain is Calcium dodecin (secE2), found in Mycobacterium tuberculosis (strain ATCC 25618 / H37Rv).